The sequence spans 328 residues: GMP reductase (328 aa).

The Thioimidate intermediate role is filled by C176. Residue 205–228 (IIADGGIRTHGDIAKSIRFGASMI) coordinates NADP(+).

Belongs to the IMPDH/GMPR family. GuaC type 2 subfamily.

It catalyses the reaction IMP + NH4(+) + NADP(+) = GMP + NADPH + 2 H(+). Catalyzes the irreversible NADPH-dependent deamination of GMP to IMP. It functions in the conversion of nucleobase, nucleoside and nucleotide derivatives of G to A nucleotides, and in maintaining the intracellular balance of A and G nucleotides. The polypeptide is GMP reductase (Streptococcus pneumoniae (strain JJA)).